The primary structure comprises 388 residues: Succinate--CoA ligase [ADP-forming] subunit beta (388 aa).

In terms of domain architecture, ATP-grasp spans 9–244; that stretch reads KQLFAEYGLP…PSQEDEREAH (236 aa). ATP contacts are provided by residues Lys-46, 53-55, Glu-99, Thr-102, and Glu-107; that span reads GRG. Asn-199 and Asp-213 together coordinate Mg(2+). Substrate-binding positions include Asn-264 and 321–323; that span reads GIV.

Belongs to the succinate/malate CoA ligase beta subunit family. As to quaternary structure, heterotetramer of two alpha and two beta subunits. The cofactor is Mg(2+).

It carries out the reaction succinate + ATP + CoA = succinyl-CoA + ADP + phosphate. The enzyme catalyses GTP + succinate + CoA = succinyl-CoA + GDP + phosphate. It participates in carbohydrate metabolism; tricarboxylic acid cycle; succinate from succinyl-CoA (ligase route): step 1/1. Succinyl-CoA synthetase functions in the citric acid cycle (TCA), coupling the hydrolysis of succinyl-CoA to the synthesis of either ATP or GTP and thus represents the only step of substrate-level phosphorylation in the TCA. The beta subunit provides nucleotide specificity of the enzyme and binds the substrate succinate, while the binding sites for coenzyme A and phosphate are found in the alpha subunit. The protein is Succinate--CoA ligase [ADP-forming] subunit beta of Marinomonas sp. (strain MWYL1).